The chain runs to 648 residues: MDDTEKRVHKYIEKHDLIRSDDKLLVAVSGGPDSLALLHFLWNSNLVPKEAISVAHLNHQLRENAAKEQRVVETFCERQGIPFYIEEVDIKSRAQSLQKGLEETARIVRYDFFEKVMAEKNINKLVLAHHADDQIETILMRLVRGSASIGWSGIQPKRELKGGQAIRPFLPITKAEIIDYAQKHELAYEIDESNTSQEYTRNRYRAQLLPFLKQENPAVYSHFERFSEETSEDFQFLEALASDLLKKNLIKNGKQTTLLLSSFKNEANPLQRRAIHLLLRYLYNEDASFITVNHIYQIIQMIQSDNPSSSIDLPNKLIANRAYDKLHFQFGEREAPSEFYHQLELNDRIELDNKASIRLKLKSSVVQTNGLNGMLLDAEEITLPLIVRNRVNGDRMTMKGQAGSKKLKDIFIDAKIPRQERDKLPVITDYTGKILWVPGVKKSAYDREFSRSKKQYIIRYTRNIGGNESMHNDIQKVLISEDELQEKIRELGRELTTEYEGRNPLVVGVLKGATPFMTDLLKRVDTYLEMDFMDVSSYGNGTVSSGEVKIIKDLNASVEGRDVLVIEDIIDSGRTLSYLVDLIKYRKAKSVKLVTLLDKPAGRNVEIEADYVGFVVPNEFVVGYGLDYAERYRNLPYIGILKPEIYSE.

29-34 (SGGPDS) lines the ATP pocket. Aspartate 627 contributes to the Mg(2+) binding site.

This sequence in the N-terminal section; belongs to the tRNA(Ile)-lysidine synthase family. In the C-terminal section; belongs to the purine/pyrimidine phosphoribosyltransferase family. Mg(2+) serves as cofactor.

It localises to the cytoplasm. The enzyme catalyses IMP + diphosphate = hypoxanthine + 5-phospho-alpha-D-ribose 1-diphosphate. The catalysed reaction is GMP + diphosphate = guanine + 5-phospho-alpha-D-ribose 1-diphosphate. It carries out the reaction cytidine(34) in tRNA(Ile2) + L-lysine + ATP = lysidine(34) in tRNA(Ile2) + AMP + diphosphate + H(+). Its function is as follows. Ligates lysine onto the cytidine present at position 34 of the AUA codon-specific tRNA(Ile) that contains the anticodon CAU, in an ATP-dependent manner. Cytidine is converted to lysidine, thus changing the amino acid specificity of the tRNA from methionine to isoleucine. In Listeria monocytogenes serovar 1/2a (strain ATCC BAA-679 / EGD-e), this protein is Bifunctional protein TilS/HprT (tilS/hprT).